The primary structure comprises 489 residues: Putative BTB/POZ domain-containing protein R773 (489 aa).

Residues 3 to 73 (SNIELVITDE…GNTSYKFQDK (71 aa)) enclose the BTB domain.

The protein belongs to the mimivirus BTB/WD family.

This is Putative BTB/POZ domain-containing protein R773 from Acanthamoeba polyphaga (Amoeba).